A 755-amino-acid chain; its full sequence is 17S U2 SnRNP complex component HTATSF1 (755 aa).

Disordered regions lie at residues 1–53 (MSGT…YEWD) and 81–122 (GASS…KAES). The residue at position 2 (S2) is an N-acetylserine. The span at 90–122 (EDVHARTAEEPPQEKAPEPTDARKKGEKRKAES) shows a compositional bias: basic and acidic residues. RRM domains are found at residues 133–218 (TNVY…VAKF) and 264–349 (RVVI…AWDG). The interval 259–353 (RMRHERVVII…AQAWDGTTDY (95 aa)) is U2AF homology motif (UHM). K297 carries the N6-acetyllysine modification. A disordered region spans residues 380–415 (RGLRRSDSVSASERAGPSRARHFSEHPSTSKMNAQE). Residues 381-755 (GLRRSDSVSA…LSSDDDDDDI (375 aa)) form a mediates interaction with the P-TEFb complex region. Residues S387, S403, S407, and S409 each carry the phosphoserine modification. Residues 405 to 415 (HPSTSKMNAQE) are compositionally biased toward polar residues. Residues K429 and K430 each participate in a glycyl lysine isopeptide (Lys-Gly) (interchain with G-Cter in SUMO2) cross-link. Residues 433–755 (KTEDGGEFEE…LSSDDDDDDI (323 aa)) form a disordered region. A phosphoserine mark is found at S445, S452, and S453. The segment covering 462 to 476 (CPEKESEEGCPKRGF) has biased composition (basic and acidic residues). Phosphoserine is present on residues S481, S485, S494, S498, S521, and S529. Residues 508 to 538 (LKNDCEENGLAKESEDDLNKESEEEVGPTKE) are compositionally biased toward basic and acidic residues. Residues 539 to 552 (SEEDDSEKESDEDC) show a composition bias toward acidic residues. The span at 553-563 (SEKQSEDGSER) shows a compositional bias: basic and acidic residues. Phosphoserine is present on residues S557, S561, and S579. The span at 564 to 579 (EFEENGLEKDLDEEGS) shows a compositional bias: acidic residues. The segment covering 580 to 590 (EKELHENVLDK) has biased composition (basic and acidic residues). Over residues 591-606 (ELEENDSENSEFEDDG) the composition is skewed to acidic residues. S597, S600, S607, S616, and S624 each carry phosphoserine. Composition is skewed to acidic residues over residues 613-633 (EEGS…EEDT) and 640-651 (DESDEKEDEEYA). At T633 the chain carries Phosphothreonine. A Phosphoserine modification is found at S642. Residues 652-674 (DEKGLEAADKKAEEGDADEKLFE) are compositionally biased toward basic and acidic residues. The span at 675 to 713 (ESDDKEDEDADGKEVEDADEKLFEDDDSNEKLFDEEEDS) shows a compositional bias: acidic residues. 5 positions are modified to phosphoserine: S676, S702, S713, S714, and S721. A compositionally biased stretch (basic and acidic residues) spans 714–725 (SEKLFDDSDERG). A Phosphoserine; by CK2 modification is found at S748.

Belongs to the HTATSF1 family. In terms of assembly, component of the 17S U2 SnRNP complex, a ribonucleoprotein complex that contains small nuclear RNA (snRNA) U2 and a number of specific proteins. Within the 17S U2 SnRNP complex, interacts (via UHM region) directly with SF3B1. Component of a complex which is at least composed of HTATSF1/Tat-SF1, the P-TEFb complex components CDK9 and CCNT1, RNA polymerase II, SUPT5H, and NCL/nucleolin. Interacts with GTF2F2/RAP30 and POLR2A. Interacts with TCERG1/CA150. Interacts with (poly-ADP-ribosylated) RPA1; promoting HTATSF1 recruitment to DNA damage sites. Interacts (when phosphorylated) with TOPBP1; promoting recruitment of TOPBP1 to DNA damage sites during S-phase. Phosphorylation at Ser-748 by CK2 during S-phase in response to DNA damage promotes interaction with TOPBP1 and double-strand break (DSB) repair via homologous recombination. Widely expressed.

The protein resides in the nucleus. It is found in the chromosome. Its function is as follows. Component of the 17S U2 SnRNP complex of the spliceosome, a large ribonucleoprotein complex that removes introns from transcribed pre-mRNAs. The 17S U2 SnRNP complex (1) directly participates in early spliceosome assembly and (2) mediates recognition of the intron branch site during pre-mRNA splicing by promoting the selection of the pre-mRNA branch-site adenosine, the nucleophile for the first step of splicing. Within the 17S U2 SnRNP complex, HTATSF1 is required to stabilize the branchpoint-interacting stem loop. HTATSF1 is displaced from the 17S U2 SnRNP complex before the stable addition of the 17S U2 SnRNP complex to the spliceosome, destabilizing the branchpoint-interacting stem loop and allowing to probe intron branch site sequences. Also acts as a regulator of transcriptional elongation, possibly by mediating the reciprocal stimulatory effect of splicing on transcriptional elongation. Involved in double-strand break (DSB) repair via homologous recombination in S-phase by promoting the recruitment of TOPBP1 to DNA damage sites. Mechanistically, HTATSF1 is (1) recruited to DNA damage sites in S-phase via interaction with poly-ADP-ribosylated RPA1 and (2) phosphorylated by CK2, promoting recruitment of TOPBP1, thereby facilitating RAD51 nucleofilaments formation and RPA displacement, followed by homologous recombination. In terms of biological role, (Microbial infection) In case of infection by HIV-1, it is up-regulated by the HIV-1 proteins NEF and gp120, acts as a cofactor required for the Tat-enhanced transcription of the virus. The chain is 17S U2 SnRNP complex component HTATSF1 from Homo sapiens (Human).